A 124-amino-acid polypeptide reads, in one-letter code: MLLLVIPILQIALENLLLFRQNCLLVVGKYHELDRILSSPSLIRVSPLFSFRFYLVNHELFPIPYQHSLGVLYLLVPLPHSRVTCFSLYTICYRIVLIWAKKKKSLIISDTAKYILAWLRKVLL.

Residues 83-100 (VTCFSLYTICYRIVLIWA) traverse the membrane as a helical segment.

The protein localises to the membrane. This is an uncharacterized protein from Saccharomyces cerevisiae (strain ATCC 204508 / S288c) (Baker's yeast).